The chain runs to 216 residues: UPF0193 protein EVG1 homolog (216 aa).

Belongs to the UPF0193 (EVG1) family.

The polypeptide is UPF0193 protein EVG1 homolog (Mus musculus (Mouse)).